We begin with the raw amino-acid sequence, 1031 residues long: Serine-repeat antigen protein 6 (1031 aa).

The N-terminal stretch at 1 to 24 is a signal peptide; the sequence is MICPIFFLYIINVLFTQYFIKCEG. An N-linked (GlcNAc...) asparagine glycan is attached at Asn-74. The segment covering 91-101 has biased composition (low complexity); the sequence is KVVSSSESGKG. The segment at 91–163 is disordered; sequence KVVSSSESGK…TESSSETLNK (73 aa). Positions 104–139 are enriched in polar residues; the sequence is VSHTKVTSEGLSDTQPNVTQSVSSSTHTPGSLDSTM. A glycan (N-linked (GlcNAc...) asparagine) is linked at Asn-120. Over residues 140 to 158 the composition is skewed to low complexity; that stretch reads STEQHSSVSQSSLPTESSS. N-linked (GlcNAc...) asparagine glycosylation occurs at Asn-449. The disordered stretch occupies residues 490-567; the sequence is TLPSESPSES…GDTNYVYDFD (78 aa). Positions 492-505 are enriched in low complexity; it reads PSESPSESSSKSDS. Residues 511 to 535 show a composition bias toward basic and acidic residues; it reads NDKDKNEDKDDMSKNSKEEFKNDDK. A glycan (N-linked (GlcNAc...) asparagine) is linked at Asn-544. Positions 554–564 are enriched in low complexity; the sequence is NINNGDTNYVY. Asn-573 is a glycosylation site (N-linked (GlcNAc...) asparagine). Cys-644 is an active-site residue. Asn-674 is a glycosylation site (N-linked (GlcNAc...) asparagine). Active-site residues include His-810 and Asn-835. 2 N-linked (GlcNAc...) asparagine glycosylation sites follow: Asn-929 and Asn-974.

The protein belongs to the peptidase C1 family. In terms of processing, just prior to merozoite egress from host erythrocytes, proteolytically cleaved by SUB1 to generate the active 75kDa form.

It is found in the parasitophorous vacuole lumen. Its subcellular location is the parasitophorous vacuole membrane. In terms of biological role, cysteine protease which plays an essential role in merozoite egress from host erythrocytes. May cleave host SPTB/beta spectrin and ANK1/ankyrin-1 which disrupts host erythrocyte actin cytoskeleton and leads to host erythrocyte cell membrane rupture. The chain is Serine-repeat antigen protein 6 from Plasmodium falciparum (isolate 3D7).